The primary structure comprises 358 residues: cAMP-dependent protein kinase catalytic subunit PRKX (358 aa).

N-acetylmethionine is present on Met1. The disordered stretch occupies residues 1-34 (MEAPGLAQAAAAESDSRKVAEETPDGAPALCPSP). Positions 49–303 (FDTLATVGTG…ANDVKHHRWF (255 aa)) constitute a Protein kinase domain. ATP contacts are provided by residues 55–63 (VGTGTFGRV) and Lys78. Asp172 acts as the Proton acceptor in catalysis. A Phosphothreonine modification is found at Thr203. Residues 304 to 358 (RSVDWEAVPQRKLKPPIVPKIAGDGDTSNFETYPENDWDTAAPVPQKDLEIFKNF) form the AGC-kinase C-terminal domain.

The protein belongs to the protein kinase superfamily. AGC Ser/Thr protein kinase family. cAMP subfamily. As to quaternary structure, like other cAMP-dependent protein kinases, the inactive holoenzyme is probably composed of 2 PRKX catalytic subunits and a dimer of regulatory subunits. Interacts (cAMP-dependent) specifically with the regulatory subunits PRKAR1A and PRKAR1B. Compared to other cAMP-dependent serine/threonine protein kinases, does not interact with the 2 other PKA regulatory subunits PRKAR2A and PRKAR2B. Interacts with cAMP-dependent protein kinase inhibitor/PKI proteins; inhibits PRKX. Interacts with GPKOW. Interacts with SMAD6. Interacts with PKD1; involved in differentiation and controlled morphogenesis of the kidney. Interacts with PIN1 (via WW domain). Phosphorylated; autophosphorylates in vitro. In terms of tissue distribution, widely expressed (at protein level). Specifically expressed in blood by macrophages and granulocytes according to PubMed:9860982.

The protein localises to the cytoplasm. It localises to the nucleus. The enzyme catalyses L-seryl-[protein] + ATP = O-phospho-L-seryl-[protein] + ADP + H(+). It carries out the reaction L-threonyl-[protein] + ATP = O-phospho-L-threonyl-[protein] + ADP + H(+). With respect to regulation, binding of cAMP to the PRKAR1A or PRKAR1B regulatory subunits induces dissociation of the holoenzyme heterotetramer. The released monomeric PRKX is then active and able to phosphorylate its substrates. Functionally, serine/threonine protein kinase regulated by and mediating cAMP signaling in cells. Acts through phosphorylation of downstream targets that may include CREB, SMAD6 and PKD1 and has multiple functions in cellular differentiation and epithelial morphogenesis. Regulates myeloid cell differentiation through SMAD6 phosphorylation. Involved in nephrogenesis by stimulating renal epithelial cell migration and tubulogenesis. Also involved in angiogenesis through stimulation of endothelial cell proliferation, migration and vascular-like structure formation. This Homo sapiens (Human) protein is cAMP-dependent protein kinase catalytic subunit PRKX (PRKX).